A 114-amino-acid polypeptide reads, in one-letter code: Transmembrane protein 14C (114 aa).

The next 4 helical transmembrane spans lie at 8-28 (LMPL…GGII), 33-53 (AGSV…GLGA), 63-83 (VWVF…RFYN), and 89-109 (PAGL…ISLL).

It belongs to the TMEM14 family.

The protein localises to the mitochondrion membrane. Required for normal heme biosynthesis. This is Transmembrane protein 14C (Tmem14c) from Mus musculus (Mouse).